We begin with the raw amino-acid sequence, 241 residues long: Thiamine import ATP-binding protein ThiQ (241 aa).

The ABC transporter domain maps to 2–239; it reads IQLDKLNHCY…PKDEVLIQYL (238 aa). 41 to 48 contacts ATP; that stretch reads GPSGAGKS.

It belongs to the ABC transporter superfamily. Thiamine importer (TC 3.A.1.19.1) family. In terms of assembly, the complex is composed of two ATP-binding proteins (ThiQ), two transmembrane proteins (ThiP) and a solute-binding protein (ThiB).

It localises to the cell inner membrane. It carries out the reaction thiamine(out) + ATP + H2O = thiamine(in) + ADP + phosphate + H(+). Its function is as follows. Part of the ABC transporter complex ThiBPQ involved in thiamine import. Responsible for energy coupling to the transport system. This is Thiamine import ATP-binding protein ThiQ from Photobacterium profundum (strain SS9).